The chain runs to 431 residues: Adenylosuccinate synthetase (431 aa).

Residues 12–18 (GDEGKGK) and 40–42 (GHT) each bind GTP. Residue D13 is the Proton acceptor of the active site. Positions 13 and 40 each coordinate Mg(2+). IMP-binding positions include 13–16 (DEGK), 38–41 (NAGH), T129, R143, Q224, T239, and R303. The Proton donor role is filled by H41. 299-305 (VTTGRAR) serves as a coordination point for substrate. GTP-binding positions include R305, 331–333 (KLD), and 413–415 (GVG).

It belongs to the adenylosuccinate synthetase family. Homodimer. It depends on Mg(2+) as a cofactor.

The protein localises to the cytoplasm. It carries out the reaction IMP + L-aspartate + GTP = N(6)-(1,2-dicarboxyethyl)-AMP + GDP + phosphate + 2 H(+). It functions in the pathway purine metabolism; AMP biosynthesis via de novo pathway; AMP from IMP: step 1/2. Functionally, plays an important role in the de novo pathway of purine nucleotide biosynthesis. Catalyzes the first committed step in the biosynthesis of AMP from IMP. In Mycobacteroides abscessus (strain ATCC 19977 / DSM 44196 / CCUG 20993 / CIP 104536 / JCM 13569 / NCTC 13031 / TMC 1543 / L948) (Mycobacterium abscessus), this protein is Adenylosuccinate synthetase.